The following is a 252-amino-acid chain: Ribosomal RNA small subunit methyltransferase J (252 aa).

S-adenosyl-L-methionine is bound by residues 101-102 (RD), 117-118 (ER), 153-154 (SS), and Asp-171.

It belongs to the methyltransferase superfamily. RsmJ family.

It is found in the cytoplasm. It catalyses the reaction guanosine(1516) in 16S rRNA + S-adenosyl-L-methionine = N(2)-methylguanosine(1516) in 16S rRNA + S-adenosyl-L-homocysteine + H(+). In terms of biological role, specifically methylates the guanosine in position 1516 of 16S rRNA. The chain is Ribosomal RNA small subunit methyltransferase J from Salmonella typhimurium (strain LT2 / SGSC1412 / ATCC 700720).